We begin with the raw amino-acid sequence, 528 residues long: Catalase (528 aa).

Residues 1 to 22 (MADRREKSADQMKLWKESRANQ) are compositionally biased toward basic and acidic residues. The disordered stretch occupies residues 1 to 32 (MADRREKSADQMKLWKESRANQKPDVLTTGGG). Active-site residues include His75 and Asn148. 8 residues coordinate NADP(+): His194, Ser201, Arg203, Asn213, Lys237, Trp303, His305, and Lys306. Position 358 (Tyr358) interacts with heme. A Microbody targeting signal; atypical motif is present at residues 525-528 (KANL).

Belongs to the catalase family. As to quaternary structure, homotetramer. Heme serves as cofactor. Requires NADP(+) as cofactor.

It is found in the peroxisome matrix. It carries out the reaction 2 H2O2 = O2 + 2 H2O. Catalyzes the degradation of hydrogen peroxide (H(2)O(2)) generated by peroxisomal oxidases to water and oxygen, thereby protecting cells from the toxic effects of hydrogen peroxide. The sequence is that of Catalase (cat) from Glandirana rugosa (Japanese wrinkled frog).